We begin with the raw amino-acid sequence, 352 residues long: MRVLAAMSGGVDSAVAAARAVDAGHDVTGVHLALSRSPESDRTGARGCCTLEDARDARRAADVLGIPFYVWDLAERFETEVIDQFVESYAAGRTPNPCVRCNERIKFAAVLDRALALGFDAVVTGHHARLDPDGTLRRSVDPAKDQSYVLGTLRPEQLGAARFPLGDSTKAQVRREAAARGLAVADKPDSHDICFISGGDTGGWLRERIGSRPGPIVDSRTGQTLGEHDGTFAFTVGQRRGLRLGHPAPDGRPRYVLDISPVTSTVTVGPAEELDIRRLVADRAAWPHEGVVTCQAQVRAHGGVVAAEAEARGDDLVVTLDTPVRGTAAGQAVVLYDGDRVLGGGHIRVTAA.

ATP-binding positions include alanine 6–serine 13 and leucine 32. Residue cysteine 101 is the Nucleophile of the active site. A disulfide bridge links cysteine 101 with cysteine 194. ATP is bound at residue glycine 125. The interaction with tRNA stretch occupies residues lysine 144 to glutamine 146. The active-site Cysteine persulfide intermediate is cysteine 194.

The protein belongs to the MnmA/TRMU family.

The protein resides in the cytoplasm. It catalyses the reaction S-sulfanyl-L-cysteinyl-[protein] + uridine(34) in tRNA + AH2 + ATP = 2-thiouridine(34) in tRNA + L-cysteinyl-[protein] + A + AMP + diphosphate + H(+). Catalyzes the 2-thiolation of uridine at the wobble position (U34) of tRNA, leading to the formation of s(2)U34. This Frankia alni (strain DSM 45986 / CECT 9034 / ACN14a) protein is tRNA-specific 2-thiouridylase MnmA.